The primary structure comprises 173 residues: Transcription factor E (173 aa).

Residues 9–92 (ADKAIFAYLH…LWELELDNMY (84 aa)) form the HTH TFE/IIEalpha-type domain.

It belongs to the TFE family. In terms of assembly, monomer. Interaction with RNA polymerase subunits RpoF and RpoE is necessary for Tfe stimulatory transcription activity. Able to interact with Tbp and RNA polymerase in the absence of DNA promoter. Interacts both with the preinitiation and elongation complexes.

Its function is as follows. Transcription factor that plays a role in the activation of archaeal genes transcribed by RNA polymerase. Facilitates transcription initiation by enhancing TATA-box recognition by TATA-box-binding protein (Tbp), and transcription factor B (Tfb) and RNA polymerase recruitment. Not absolutely required for transcription in vitro, but particularly important in cases where Tbp or Tfb function is not optimal. It dynamically alters the nucleic acid-binding properties of RNA polymerases by stabilizing the initiation complex and destabilizing elongation complexes. Seems to translocate with the RNA polymerase following initiation and acts by binding to the non template strand of the transcription bubble in elongation complexes. The protein is Transcription factor E of Methanospirillum hungatei JF-1 (strain ATCC 27890 / DSM 864 / NBRC 100397 / JF-1).